A 113-amino-acid chain; its full sequence is Hydrogenase maturation factor HybF (113 aa).

Ni(2+) contacts are provided by H2 and E3. 4 residues coordinate Zn(2+): C73, C76, C89, and C92.

Belongs to the HypA/HybF family. HybF subfamily.

In terms of biological role, involved in the maturation of [NiFe] hydrogenases. Required for nickel insertion into the metal center of the hydrogenase. This Klebsiella pneumoniae protein is Hydrogenase maturation factor HybF.